A 119-amino-acid chain; its full sequence is Protein TusC (119 aa).

It belongs to the DsrF/TusC family. In terms of assembly, heterohexamer, formed by a dimer of trimers. The hexameric TusBCD complex contains 2 copies each of TusB, TusC and TusD. The TusBCD complex interacts with TusE.

The protein localises to the cytoplasm. Functionally, part of a sulfur-relay system required for 2-thiolation of 5-methylaminomethyl-2-thiouridine (mnm(5)s(2)U) at tRNA wobble positions. The protein is Protein TusC of Pectobacterium atrosepticum (strain SCRI 1043 / ATCC BAA-672) (Erwinia carotovora subsp. atroseptica).